The following is a 239-amino-acid chain: Ribosomal RNA small subunit methyltransferase G (239 aa).

S-adenosyl-L-methionine is bound by residues G78, F83, 129–130 (AE), and R148.

This sequence belongs to the methyltransferase superfamily. RNA methyltransferase RsmG family.

It localises to the cytoplasm. Functionally, specifically methylates the N7 position of a guanine in 16S rRNA. The sequence is that of Ribosomal RNA small subunit methyltransferase G from Clostridium botulinum (strain 657 / Type Ba4).